Reading from the N-terminus, the 100-residue chain is Urease subunit gamma (100 aa).

It belongs to the urease gamma subunit family. In terms of assembly, heterotrimer of UreA (gamma), UreB (beta) and UreC (alpha) subunits. Three heterotrimers associate to form the active enzyme.

The protein resides in the cytoplasm. It catalyses the reaction urea + 2 H2O + H(+) = hydrogencarbonate + 2 NH4(+). Its pathway is nitrogen metabolism; urea degradation; CO(2) and NH(3) from urea (urease route): step 1/1. The polypeptide is Urease subunit gamma (Pseudomonas putida (strain ATCC 700007 / DSM 6899 / JCM 31910 / BCRC 17059 / LMG 24140 / F1)).